The sequence spans 360 residues: MKPSIVAKLEALHERHEEVQALLGDAGTIADQERFRALSREYAQLSDVSRCFTDWQQVQDDIETAQMMLDDPEMREMAQDELREAKEKGEQLEQQLQVLLLPKDPDDERNAFLEVRAGTGGDEAALFAGDLFRMYSRYAEARRWRVEIMSASEGEHGGYKEIIAKISGDGVYGRLKFESGGHRVQRVPATESQGRIHTSACTVAVMPELPEAELPDINPADLRIDTFRSSGAGGQHVNTTDSAIRITHLPTGIVVECQDERSQHKNKAKALSVLGARIHAAETAKRQQAEASTRRNLLGSGDRSDRNRTYNFPQGRVTDHRINLTLYRLDEAMEGKLDMLIEPIVQEHQADQLAALSEQE.

Gln235 bears the N5-methylglutamine mark. Positions 284-313 are disordered; it reads AKRQQAEASTRRNLLGSGDRSDRNRTYNFP.

This sequence belongs to the prokaryotic/mitochondrial release factor family. In terms of processing, methylated by PrmC. Methylation increases the termination efficiency of RF1.

The protein localises to the cytoplasm. Peptide chain release factor 1 directs the termination of translation in response to the peptide chain termination codons UAG and UAA. The sequence is that of Peptide chain release factor 1 from Citrobacter koseri (strain ATCC BAA-895 / CDC 4225-83 / SGSC4696).